Reading from the N-terminus, the 68-residue chain is Large ribosomal subunit protein bL32 (68 aa).

Belongs to the bacterial ribosomal protein bL32 family.

The protein is Large ribosomal subunit protein bL32 of Cereibacter sphaeroides (strain ATCC 17025 / ATH 2.4.3) (Rhodobacter sphaeroides).